The primary structure comprises 521 residues: NAD(P)H-quinone oxidoreductase subunit 2 (521 aa).

14 helical membrane passes run 14–34 (VILP…TDLI), 42–62 (LTPA…TLQW), 79–99 (LSIV…LLSI), 109–129 (LGEF…LSGA), 132–152 (LVTI…LTGY), 167–187 (LLIG…LYGL), 207–227 (LALL…ISAV), 241–261 (PTPI…ALAI), 275–295 (WHFV…VVAL), 303–323 (LLAY…IAGT), 331–351 (VYYL…VILF), 375–395 (LGLS…GFFG), 397–417 (LYLF…LALI), and 463–483 (AGLV…NPLF).

It belongs to the complex I subunit 2 family. As to quaternary structure, NDH-1 can be composed of about 15 different subunits; different subcomplexes with different compositions have been identified which probably have different functions.

It localises to the cellular thylakoid membrane. The enzyme catalyses a plastoquinone + NADH + (n+1) H(+)(in) = a plastoquinol + NAD(+) + n H(+)(out). The catalysed reaction is a plastoquinone + NADPH + (n+1) H(+)(in) = a plastoquinol + NADP(+) + n H(+)(out). Functionally, NDH-1 shuttles electrons from an unknown electron donor, via FMN and iron-sulfur (Fe-S) centers, to quinones in the respiratory and/or the photosynthetic chain. The immediate electron acceptor for the enzyme in this species is believed to be plastoquinone. Couples the redox reaction to proton translocation, and thus conserves the redox energy in a proton gradient. Cyanobacterial NDH-1 also plays a role in inorganic carbon-concentration. The protein is NAD(P)H-quinone oxidoreductase subunit 2 of Synechococcus elongatus (strain ATCC 33912 / PCC 7942 / FACHB-805) (Anacystis nidulans R2).